The primary structure comprises 353 residues: UDP-3-O-acylglucosamine N-acyltransferase (353 aa).

The active-site Proton acceptor is the H242.

Belongs to the transferase hexapeptide repeat family. LpxD subfamily. As to quaternary structure, homotrimer.

The enzyme catalyses a UDP-3-O-[(3R)-3-hydroxyacyl]-alpha-D-glucosamine + a (3R)-hydroxyacyl-[ACP] = a UDP-2-N,3-O-bis[(3R)-3-hydroxyacyl]-alpha-D-glucosamine + holo-[ACP] + H(+). It participates in bacterial outer membrane biogenesis; LPS lipid A biosynthesis. In terms of biological role, catalyzes the N-acylation of UDP-3-O-acylglucosamine using 3-hydroxyacyl-ACP as the acyl donor. Is involved in the biosynthesis of lipid A, a phosphorylated glycolipid that anchors the lipopolysaccharide to the outer membrane of the cell. This chain is UDP-3-O-acylglucosamine N-acyltransferase, found in Pseudomonas aeruginosa (strain LESB58).